The chain runs to 466 residues: Chromosomal replication initiator protein DnaA (466 aa).

The interval 1 to 86 (MSLSLWQQCL…EVGTKPVTQT (86 aa)) is domain I, interacts with DnaA modulators. The domain II stretch occupies residues 86 to 129 (TLKTPVHNVVAPTQTTTAQPQRVAPAARSGWDNVPAPAEPTYRS). Residues 130 to 346 (NVNVKHTFDN…GALNRVIANA (217 aa)) are domain III, AAA+ region. The ATP site is built by glycine 174, glycine 176, lysine 177, and threonine 178. The segment at 347 to 466 (NFTGRAITID…FSNLIRTLSS (120 aa)) is domain IV, binds dsDNA.

The protein belongs to the DnaA family. In terms of assembly, oligomerizes as a right-handed, spiral filament on DNA at oriC.

It is found in the cytoplasm. Its function is as follows. Plays an essential role in the initiation and regulation of chromosomal replication. ATP-DnaA binds to the origin of replication (oriC) to initiate formation of the DNA replication initiation complex once per cell cycle. Binds the DnaA box (a 9 base pair repeat at the origin) and separates the double-stranded (ds)DNA. Forms a right-handed helical filament on oriC DNA; dsDNA binds to the exterior of the filament while single-stranded (ss)DNA is stabiized in the filament's interior. The ATP-DnaA-oriC complex binds and stabilizes one strand of the AT-rich DNA unwinding element (DUE), permitting loading of DNA polymerase. After initiation quickly degrades to an ADP-DnaA complex that is not apt for DNA replication. Binds acidic phospholipids. This Salmonella gallinarum (strain 287/91 / NCTC 13346) protein is Chromosomal replication initiator protein DnaA.